We begin with the raw amino-acid sequence, 165 residues long: Ribosome maturation factor RimM (165 aa).

A PRC barrel domain is found at 94 to 165; the sequence is EDEFYIADLT…YVILNYQREA (72 aa).

The protein belongs to the RimM family. Binds ribosomal protein uS19.

Its subcellular location is the cytoplasm. Functionally, an accessory protein needed during the final step in the assembly of 30S ribosomal subunit, possibly for assembly of the head region. Essential for efficient processing of 16S rRNA. May be needed both before and after RbfA during the maturation of 16S rRNA. It has affinity for free ribosomal 30S subunits but not for 70S ribosomes. This Rickettsia rickettsii (strain Iowa) protein is Ribosome maturation factor RimM.